We begin with the raw amino-acid sequence, 390 residues long: Olfactomedin-like protein 3A (390 aa).

Positions 1-17 (MRALQLLVLVLSGLVGA) are cleaved as a signal peptide. A coiled-coil region spans residues 18–91 (QQQALMDYLE…RVDRVEREMD (74 aa)). One can recognise an Olfactomedin-like domain in the interval 130 to 386 (DCSDMISSIK…QILYKLQLKK (257 aa)). A disulfide bridge links Cys131 with Cys313. Asn169 is a glycosylation site (N-linked (GlcNAc...) asparagine).

It belongs to the OLFML3 family.

It is found in the secreted. Its function is as follows. Secreted scaffold protein that plays an essential role in dorsoventral patterning during early development. Stabilizes axial formation by restricting chordin (CHRD) activity on the dorsal side. Acts by facilitating the association between the tolloid proteases and their substrate chordin (CHRD), leading to enhance chordin (CHRD) degradation. This chain is Olfactomedin-like protein 3A (olfml3a), found in Danio rerio (Zebrafish).